A 378-amino-acid polypeptide reads, in one-letter code: Biotin synthase (378 aa).

The 225-residue stretch at 68–292 (NEVQISTLLS…IAVTRICCPS (225 aa)) folds into the Radical SAM core domain. 3 residues coordinate [4Fe-4S] cluster: cysteine 83, cysteine 87, and cysteine 90. Residues cysteine 129, cysteine 160, cysteine 220, and arginine 296 each contribute to the [2Fe-2S] cluster site.

Belongs to the radical SAM superfamily. Biotin synthase family. As to quaternary structure, homodimer. The cofactor is [4Fe-4S] cluster. [2Fe-2S] cluster serves as cofactor.

The catalysed reaction is (4R,5S)-dethiobiotin + (sulfur carrier)-SH + 2 reduced [2Fe-2S]-[ferredoxin] + 2 S-adenosyl-L-methionine = (sulfur carrier)-H + biotin + 2 5'-deoxyadenosine + 2 L-methionine + 2 oxidized [2Fe-2S]-[ferredoxin]. Its pathway is cofactor biosynthesis; biotin biosynthesis; biotin from 7,8-diaminononanoate: step 2/2. Its function is as follows. Catalyzes the conversion of dethiobiotin (DTB) to biotin by the insertion of a sulfur atom into dethiobiotin via a radical-based mechanism. The protein is Biotin synthase of Psychrobacter arcticus (strain DSM 17307 / VKM B-2377 / 273-4).